Consider the following 570-residue polypeptide: Putative ABC transporter ATP-binding protein MW2603 (570 aa).

2 ABC transporter domains span residues 6–247 (ISFK…GIRE) and 304–537 (LELN…ASLR). Residues 40 to 47 (GASGSGKS) and 338 to 345 (GHNGAGKS) each bind ATP.

It belongs to the ABC transporter superfamily.

Its subcellular location is the cell membrane. Its function is as follows. Probably part of an ABC transporter complex. Responsible for energy coupling to the transport system. The protein is Putative ABC transporter ATP-binding protein MW2603 of Staphylococcus aureus (strain MW2).